A 245-amino-acid chain; its full sequence is 1-(5-phosphoribosyl)-5-[(5-phosphoribosylamino)methylideneamino] imidazole-4-carboxamide isomerase (245 aa).

Residue Asp-7 is the Proton acceptor of the active site. Asp-129 acts as the Proton donor in catalysis.

The protein belongs to the HisA/HisF family.

Its subcellular location is the cytoplasm. It carries out the reaction 1-(5-phospho-beta-D-ribosyl)-5-[(5-phospho-beta-D-ribosylamino)methylideneamino]imidazole-4-carboxamide = 5-[(5-phospho-1-deoxy-D-ribulos-1-ylimino)methylamino]-1-(5-phospho-beta-D-ribosyl)imidazole-4-carboxamide. It participates in amino-acid biosynthesis; L-histidine biosynthesis; L-histidine from 5-phospho-alpha-D-ribose 1-diphosphate: step 4/9. The protein is 1-(5-phosphoribosyl)-5-[(5-phosphoribosylamino)methylideneamino] imidazole-4-carboxamide isomerase of Shewanella sp. (strain W3-18-1).